A 66-amino-acid chain; its full sequence is MAKASETKTVTVEQIGSPIRRPGDQRATLVGLGLNKRHRRSTLQDTPAVRGMIAKVQHLVRVVADE.

The protein belongs to the universal ribosomal protein uL30 family. Part of the 50S ribosomal subunit.

The sequence is that of Large ribosomal subunit protein uL30 from Azorhizobium caulinodans (strain ATCC 43989 / DSM 5975 / JCM 20966 / LMG 6465 / NBRC 14845 / NCIMB 13405 / ORS 571).